The sequence spans 143 residues: Nucleoside diphosphate kinase (143 aa).

ATP is bound by residues Lys-11, Phe-59, Arg-87, Thr-93, Arg-104, and Asn-114. The active-site Pros-phosphohistidine intermediate is the His-117.

This sequence belongs to the NDK family. Homotetramer. The cofactor is Mg(2+).

It is found in the cytoplasm. It catalyses the reaction a 2'-deoxyribonucleoside 5'-diphosphate + ATP = a 2'-deoxyribonucleoside 5'-triphosphate + ADP. It carries out the reaction a ribonucleoside 5'-diphosphate + ATP = a ribonucleoside 5'-triphosphate + ADP. Major role in the synthesis of nucleoside triphosphates other than ATP. The ATP gamma phosphate is transferred to the NDP beta phosphate via a ping-pong mechanism, using a phosphorylated active-site intermediate. The protein is Nucleoside diphosphate kinase of Psychrobacter cryohalolentis (strain ATCC BAA-1226 / DSM 17306 / VKM B-2378 / K5).